The chain runs to 187 residues: Transcriptional repressor NrdR (187 aa).

The tract at residues 1 to 21 (MQCPYCQHTNSRVLESRSSEG) is disordered. Residues 3–34 (CPYCQHTNSRVLESRSSEGGQSIRRRRECLNC) fold into a zinc finger. The region spanning 49-139 (ITVIKHDGKK…VYGRFKGIKD (91 aa)) is the ATP-cone domain. Composition is skewed to polar residues over residues 152-162 (ISSPMSQWSKS) and 170-187 (SQTS…ENSR). The tract at residues 152-187 (ISSPMSQWSKSSTRDRDQSQTSPCLSLTHNGSENSR) is disordered.

It belongs to the NrdR family. Zn(2+) serves as cofactor.

Functionally, negatively regulates transcription of bacterial ribonucleotide reductase nrd genes and operons by binding to NrdR-boxes. This is Transcriptional repressor NrdR from Crocosphaera subtropica (strain ATCC 51142 / BH68) (Cyanothece sp. (strain ATCC 51142)).